An 806-amino-acid polypeptide reads, in one-letter code: Leucine--tRNA ligase (806 aa).

Positions 40-51 (PYPSGKGLHVGH) match the 'HIGH' region motif. The 'KMSKS' region signature appears at 580-584 (KMSKS). Residue Lys-583 coordinates ATP.

This sequence belongs to the class-I aminoacyl-tRNA synthetase family.

The protein resides in the cytoplasm. It catalyses the reaction tRNA(Leu) + L-leucine + ATP = L-leucyl-tRNA(Leu) + AMP + diphosphate. The sequence is that of Leucine--tRNA ligase from Ureaplasma parvum serovar 3 (strain ATCC 27815 / 27 / NCTC 11736).